The chain runs to 498 residues: Transcription factor kayak (498 aa).

A compositionally biased stretch (polar residues) spans 108-127 (ASLGQGSESEDSNASYNDTQ). Disordered regions lie at residues 108-144 (ASLGQGSESEDSNASYNDTQMNEEQDTTDTSSAHTDS) and 177-234 (GSAS…KRRV). Composition is skewed to low complexity over residues 135 to 144 (TDTSSAHTDS) and 177 to 191 (GSASVGSSNANTSNT). In terms of domain architecture, bZIP spans 212-275 (EQKRAVRRER…KQLEYLLATH (64 aa)). Residues 214-233 (KRAVRRERNKQAAARCRKRR) form a basic motif region. The leucine-zipper stretch occupies residues 240–247 (LTEEVEQL). A compositionally biased stretch (low complexity) spans 304-325 (AGSSGSGASSHHNHNSNDSSNG). Disordered regions lie at residues 304–345 (AGSS…SPLD) and 465–498 (TPVSGPLVPNSSSTNKHPLELPTPTAEPSKLVSL). Positions 333–343 (TLNSTGRSNSP) are enriched in polar residues. Residue serine 342 is modified to Phosphoserine.

It belongs to the bZIP family. Fos subfamily. Homodimer. Heterodimer with Jra. The kay-Jra heterodimer binds more stably to the AP-1 site than either of the two proteins alone.

It localises to the nucleus. Functionally, developmentally regulated transcription factor AP-1 binds and recognizes the enhancer DNA sequence: 5'-TGA[CG]TCA-3'. May play a role in the function or determination of a particular subset of cells in the developing embryo. It is able to carry out its function either independently of or in conjunction with Jra. In Drosophila simulans (Fruit fly), this protein is Transcription factor kayak.